Consider the following 113-residue polypeptide: Hydrogenase maturation factor HypA (113 aa).

Residue His2 coordinates Ni(2+). 4 residues coordinate Zn(2+): Cys73, Cys76, Cys89, and Cys92.

This sequence belongs to the HypA/HybF family.

Involved in the maturation of [NiFe] hydrogenases. Required for nickel insertion into the metal center of the hydrogenase. The sequence is that of Hydrogenase maturation factor HypA from Chlorobaculum tepidum (strain ATCC 49652 / DSM 12025 / NBRC 103806 / TLS) (Chlorobium tepidum).